Here is a 311-residue protein sequence, read N- to C-terminus: GTPase Era (311 aa).

One can recognise an Era-type G domain in the interval 18 to 185 (RSGFVALIGA…AKYLAESVPN (168 aa)). A G1 region spans residues 26-33 (GAPNAGKS). 26–33 (GAPNAGKS) contacts GTP. Residues 52–56 (QTTRA) are G2. The tract at residues 73 to 76 (DTPG) is G3. GTP contacts are provided by residues 73–77 (DTPGI) and 135–138 (NKVD). The segment at 135–138 (NKVD) is G4. Residues 164–166 (ISA) are G5. One can recognise a KH type-2 domain in the interval 216 to 293 (LHEELPYAST…HLFLFVKVRE (78 aa)).

This sequence belongs to the TRAFAC class TrmE-Era-EngA-EngB-Septin-like GTPase superfamily. Era GTPase family. In terms of assembly, monomer.

It localises to the cytoplasm. Its subcellular location is the cell inner membrane. Functionally, an essential GTPase that binds both GDP and GTP, with rapid nucleotide exchange. Plays a role in 16S rRNA processing and 30S ribosomal subunit biogenesis and possibly also in cell cycle regulation and energy metabolism. The polypeptide is GTPase Era (Brucella suis biovar 1 (strain 1330)).